The following is a 1179-amino-acid chain: ATP-dependent helicase/deoxyribonuclease subunit B (1179 aa).

This sequence belongs to the helicase family. AddB/RexB type 2 subfamily. In terms of assembly, heterodimer of AddA and RexB. The cofactor is Mg(2+).

Functionally, the heterodimer acts as both an ATP-dependent DNA helicase and an ATP-dependent, dual-direction single-stranded exonuclease. Recognizes the chi site generating a DNA molecule suitable for the initiation of homologous recombination. This subunit has 5' -&gt; 3' nuclease activity but not helicase activity. This Lactobacillus delbrueckii subsp. bulgaricus (strain ATCC 11842 / DSM 20081 / BCRC 10696 / JCM 1002 / NBRC 13953 / NCIMB 11778 / NCTC 12712 / WDCM 00102 / Lb 14) protein is ATP-dependent helicase/deoxyribonuclease subunit B.